The primary structure comprises 1184 residues: MGRIKEKESKAPSLSESHTDYEYAATAATSSDDGFDEPNRVPVHKRKVQLTNGEAKKKKFKHADSNVKPPTLEEIKEIRDTRNLFHSNLFKLQVKEMLEEIQLKPKYSNYIETWIETFTITVQELKDGLLDTCELEVPLHLHKKSFNFQFLTPTSEPKLIGAAATGTLLGPKIVVDVALEMPAACFQHDDYRNLIYDQKRALYLATVASKIKQSPAFKADQFAYNYHANNPLKPVLELTPASKLGKYLLLRVYITAQSEIFKLSRFLPWTNNIRPSVFGDKWNEAETLPATQHYNANVLFDLTLAENQKLLLSTFTGRRNFQEGLLLLKVWLRQRQLDVGFSGFSAHILAAYIAYLKQQRLLHQSSSSYQIARTVWNQLANSDWTQGITLSQHQPHQLITLAGYYDVCFMDVTGYYNLCANLPLAVYKAVCAEAKLAVELLNDVKVNSFSHIFMQTSPLYTRMDNILKITNPASVDQLLQLHVQPHVKYDYANYAHPQLLKLLTDLLQKGLGQRVHAILPLEVPCSPWTVDTKAPVIGRSLTLGLILDPEHAHEVLDKGPATNEDANGAAEFRKFWGNKSNLRRFQDGSITEAVVWATATDAPSQKRLIVRQIVLYLLEHQLQLEPSEVQYIAGNLDVVYSLTPSFKVAKLQTKLKIQQETDAEALTPNVIHCYDALARQLHSLGDLPLDIVSISGISPVFRYCEPQPLLPQARLVSDRIHAGQVLRVIIQLGPSGKWPSDLGALRSLKTAFLIQIGQQLKEQHHLHWHLCKDGLLVLKQGYCFLLELAHSKELALLKQQQTERGVTTYVDNPASRELERRHYILPRVSGALHALHQMHGAFGPTVLIAKRWLAAQLLDDGLWPSIATELLVAHLFQQRQTPHTTVSPQTGFIRFLQLLAHSDWSGELFLLNFNNSWTEQQITDLEHSYRSERDSYPSLCLATAYDQQHAGRLWTSNNSPSKPVLGRVTLLARHALQLIESSLLSPKLAFVRPAQLFMASGDGYDLVIQLKPDLLSNTLCYDLGSPFLPFSQRNFRLPLAGCDQLAKVVQQLRDAYSEYAAFFYNPHGGKELAIVWRPASEFAPKPFKVNELQACTPCVGGKVQVDRDTLVEDFKLLLKDFYLRVCTPQELKREQREHNKPKRYFNGQGESEPDKPQKKKKKASTIPTNAKKRLMKSKSMNALC.

A compositionally biased stretch (basic and acidic residues) spans 1–10; that stretch reads MGRIKEKESK. Disordered stretches follow at residues 1–42 and 1133–1184; these read MGRI…NRVP and REQR…NALC.

Belongs to the NRAP family. Part of the small subunit (SSU) processome, composed of more than 70 proteins and the RNA chaperone small nucleolar RNA (snoRNA) U3.

It is found in the nucleus. The protein localises to the nucleolus. Its subcellular location is the chromosome. Its function is as follows. Part of the small subunit (SSU) processome, first precursor of the small eukaryotic ribosomal subunit. During the assembly of the SSU processome in the nucleolus, many ribosome biogenesis factors, an RNA chaperone and ribosomal proteins associate with the nascent pre-rRNA and work in concert to generate RNA folding, modifications, rearrangements and cleavage as well as targeted degradation of pre-ribosomal RNA by the RNA exosome. This chain is Nucleolar protein 6, found in Drosophila virilis (Fruit fly).